Here is a 356-residue protein sequence, read N- to C-terminus: Dual-specificity RNA methyltransferase RlmN (356 aa).

E92 (proton acceptor) is an active-site residue. The Radical SAM core domain maps to 98 to 334 (EKDRGTLCIS…MRRTRGEDID (237 aa)). An intrachain disulfide couples C105 to C337. The [4Fe-4S] cluster site is built by C112, C116, and C119. S-adenosyl-L-methionine-binding positions include 162–163 (GE), S194, 216–218 (SLH), and N294. The active-site S-methylcysteine intermediate is the C337.

It belongs to the radical SAM superfamily. RlmN family. The cofactor is [4Fe-4S] cluster.

It localises to the cytoplasm. The catalysed reaction is adenosine(2503) in 23S rRNA + 2 reduced [2Fe-2S]-[ferredoxin] + 2 S-adenosyl-L-methionine = 2-methyladenosine(2503) in 23S rRNA + 5'-deoxyadenosine + L-methionine + 2 oxidized [2Fe-2S]-[ferredoxin] + S-adenosyl-L-homocysteine. It catalyses the reaction adenosine(37) in tRNA + 2 reduced [2Fe-2S]-[ferredoxin] + 2 S-adenosyl-L-methionine = 2-methyladenosine(37) in tRNA + 5'-deoxyadenosine + L-methionine + 2 oxidized [2Fe-2S]-[ferredoxin] + S-adenosyl-L-homocysteine. Specifically methylates position 2 of adenine 2503 in 23S rRNA and position 2 of adenine 37 in tRNAs. m2A2503 modification seems to play a crucial role in the proofreading step occurring at the peptidyl transferase center and thus would serve to optimize ribosomal fidelity. The polypeptide is Dual-specificity RNA methyltransferase RlmN (Vesicomyosocius okutanii subsp. Calyptogena okutanii (strain HA)).